We begin with the raw amino-acid sequence, 179 residues long: ATP synthase subunit delta (179 aa).

Belongs to the ATPase delta chain family. In terms of assembly, F-type ATPases have 2 components, F(1) - the catalytic core - and F(0) - the membrane proton channel. F(1) has five subunits: alpha(3), beta(3), gamma(1), delta(1), epsilon(1). F(0) has three main subunits: a(1), b(2) and c(10-14). The alpha and beta chains form an alternating ring which encloses part of the gamma chain. F(1) is attached to F(0) by a central stalk formed by the gamma and epsilon chains, while a peripheral stalk is formed by the delta and b chains.

The protein resides in the cell membrane. Its function is as follows. F(1)F(0) ATP synthase produces ATP from ADP in the presence of a proton or sodium gradient. F-type ATPases consist of two structural domains, F(1) containing the extramembraneous catalytic core and F(0) containing the membrane proton channel, linked together by a central stalk and a peripheral stalk. During catalysis, ATP synthesis in the catalytic domain of F(1) is coupled via a rotary mechanism of the central stalk subunits to proton translocation. In terms of biological role, this protein is part of the stalk that links CF(0) to CF(1). It either transmits conformational changes from CF(0) to CF(1) or is implicated in proton conduction. This is ATP synthase subunit delta from Clostridium botulinum (strain Kyoto / Type A2).